Here is a 365-residue protein sequence, read N- to C-terminus: Phosphatidylcholine:ceramide cholinephosphotransferase 2 (365 aa).

The disordered stretch occupies residues Leu-9 to Arg-50. Positions Ser-15–Thr-28 are enriched in low complexity. Helical transmembrane passes span Gly-80–Val-100, Phe-128–Phe-148, Phe-159–Leu-179, Ile-219–Phe-239, and Phe-248–Val-268. The active site involves His-229. Active-site residues include His-272 and Asp-276. The helical transmembrane segment at Tyr-273–Trp-290 threads the bilayer. Topologically, residues Tyr-291 to Thr-365 are cytoplasmic. Residues Cys-331, Cys-332, Cys-343, and Cys-348 are each lipidated (S-palmitoyl cysteine).

The protein belongs to the sphingomyelin synthase family. Palmitoylated on Cys-331, Cys-332, Cys-343 and Cys-348; which plays an important role in plasma membrane localization. Expression restricted to late round spermatids and elongating spermatids but not detected in late elongate spermatids and Sertoli cells (at protein level).

It is found in the cell membrane. The protein localises to the golgi apparatus membrane. The enzyme catalyses an N-acylsphing-4-enine + a 1,2-diacyl-sn-glycero-3-phosphocholine = a sphingomyelin + a 1,2-diacyl-sn-glycerol. The catalysed reaction is an N-acylsphinganine + a 1,2-diacyl-sn-glycero-3-phosphocholine = an N-acylsphinganine-1-phosphocholine + a 1,2-diacyl-sn-glycerol. It catalyses the reaction an N-acyl-(4R)-4-hydroxysphinganine + a 1,2-diacyl-sn-glycero-3-phosphocholine = an N-acyl-(4R)-4-hydroxysphinganine-phosphocholine + a 1,2-diacyl-sn-glycerol. It carries out the reaction an N-acylsphing-4-enine + a 1,2-diacyl-sn-glycero-3-phosphoethanolamine = an N-acylsphing-4-enine 1-phosphoethanolamine + a 1,2-diacyl-sn-glycerol. The enzyme catalyses an N-acylsphinganine + a 1,2-diacyl-sn-glycero-3-phosphoethanolamine = an N-acylsphinganine-1-phosphoethanolamine + a 1,2-diacyl-sn-glycerol. The catalysed reaction is an N-acyl-(4R)-4-hydroxysphinganine + a 1,2-diacyl-sn-glycero-3-phosphoethanolamine = an N-acyl-(4R)-4-hydroxysphinganine-1-phosphoethanolamine + a 1,2-diacyl-sn-glycerol. It catalyses the reaction 1,2-dihexadecanoyl-sn-glycero-3-phosphocholine + an N-acylsphing-4-enine = 1,2-dihexadecanoyl-sn-glycerol + a sphingomyelin. It carries out the reaction 1-(9Z-octadecenoyl)-2-acyl-sn-3-glycerol + a sphingomyelin = a 1-(9Z-octadecenoyl)-2-acyl-sn-glycero-3-phosphocholine + an N-acylsphing-4-enine. The enzyme catalyses N-hexadecanoylsphinganine + a 1,2-diacyl-sn-glycero-3-phosphocholine = N-hexadecanoyl-sphinganine-1-phosphocholine + a 1,2-diacyl-sn-glycerol. The catalysed reaction is N-hexadecanoyl-(4R)-hydroxysphinganine + a 1,2-diacyl-sn-glycero-3-phosphocholine = N-hexadecanoyl-(4R)-hydroxysphinganine-phosphocholine + a 1,2-diacyl-sn-glycerol. It catalyses the reaction N-hexadecanoylsphinganine + a 1,2-diacyl-sn-glycero-3-phosphoethanolamine = N-hexadecanoyl-sphinganine-1-phosphoethanolamine + a 1,2-diacyl-sn-glycerol. It carries out the reaction N-hexadecanoyl-(4R)-hydroxysphinganine + a 1,2-diacyl-sn-glycero-3-phosphoethanolamine = N-hexadecanoyl-(4R)-hydroxysphinganine-1-phosphoethanolamine + a 1,2-diacyl-sn-glycerol. It participates in sphingolipid metabolism. Its function is as follows. Sphingomyelin synthase that primarily contributes to sphingomyelin synthesis and homeostasis at the plasma membrane. Catalyzes the reversible transfer of phosphocholine moiety in sphingomyelin biosynthesis: in the forward reaction transfers phosphocholine head group of phosphatidylcholine (PC) on to ceramide (CER) to form ceramide phosphocholine (sphingomyelin, SM) and diacylglycerol (DAG) as by-product, and in the reverse reaction transfers phosphocholine from SM to DAG to form PC and CER. The direction of the reaction appears to depend on the levels of CER and DAG in the plasma membrane. Does not use free phosphorylcholine or CDP-choline as donors. Can also transfer phosphoethanolamine head group of phosphatidylethanolamine (PE) on to ceramide (CER) to form ceramide phosphoethanolamine (CPE). Regulates receptor-mediated signal transduction via mitogenic DAG and proapoptotic CER, as well as via SM, a structural component of membrane rafts that serve as platforms for signal transduction and protein sorting. To a lesser extent, plays a role in secretory transport via regulation of DAG pool at the Golgi apparatus and its downstream effects on PRKD1. Required for normal bone matrix mineralization. The sequence is that of Phosphatidylcholine:ceramide cholinephosphotransferase 2 (Sgms2) from Rattus norvegicus (Rat).